A 475-amino-acid polypeptide reads, in one-letter code: Ribulose bisphosphate carboxylase large chain (475 aa).

Positions 1 to 2 (MS) are excised as a propeptide. Pro-3 is modified (N-acetylproline). Lys-14 bears the N6,N6,N6-trimethyllysine mark. Substrate-binding residues include Asn-123 and Thr-173. Lys-175 acts as the Proton acceptor in catalysis. Residue Lys-177 coordinates substrate. Residues Lys-201, Asp-203, and Glu-204 each contribute to the Mg(2+) site. Lys-201 carries the post-translational modification N6-carboxylysine. His-294 serves as the catalytic Proton acceptor. Residues Arg-295, His-327, and Ser-379 each coordinate substrate.

The protein belongs to the RuBisCO large chain family. Type I subfamily. Heterohexadecamer of 8 large chains and 8 small chains; disulfide-linked. The disulfide link is formed within the large subunit homodimers. Mg(2+) serves as cofactor. In terms of processing, the disulfide bond which can form in the large chain dimeric partners within the hexadecamer appears to be associated with oxidative stress and protein turnover.

The protein localises to the plastid. It localises to the chloroplast. It catalyses the reaction 2 (2R)-3-phosphoglycerate + 2 H(+) = D-ribulose 1,5-bisphosphate + CO2 + H2O. The catalysed reaction is D-ribulose 1,5-bisphosphate + O2 = 2-phosphoglycolate + (2R)-3-phosphoglycerate + 2 H(+). RuBisCO catalyzes two reactions: the carboxylation of D-ribulose 1,5-bisphosphate, the primary event in carbon dioxide fixation, as well as the oxidative fragmentation of the pentose substrate in the photorespiration process. Both reactions occur simultaneously and in competition at the same active site. This is Ribulose bisphosphate carboxylase large chain from Keteleeria davidiana (David's keteleeria).